A 544-amino-acid polypeptide reads, in one-letter code: Protein nucleotidyltransferase YdiU (544 aa).

ATP contacts are provided by Gly133, Gly135, Arg136, Lys155, Asp167, Gly168, Arg218, and Arg225. Asp294 acts as the Proton acceptor in catalysis. Mg(2+)-binding residues include Asn295 and Asp304. Asp304 lines the ATP pocket.

It belongs to the SELO family. Mg(2+) is required as a cofactor. Mn(2+) serves as cofactor.

The enzyme catalyses L-seryl-[protein] + ATP = 3-O-(5'-adenylyl)-L-seryl-[protein] + diphosphate. It catalyses the reaction L-threonyl-[protein] + ATP = 3-O-(5'-adenylyl)-L-threonyl-[protein] + diphosphate. It carries out the reaction L-tyrosyl-[protein] + ATP = O-(5'-adenylyl)-L-tyrosyl-[protein] + diphosphate. The catalysed reaction is L-histidyl-[protein] + UTP = N(tele)-(5'-uridylyl)-L-histidyl-[protein] + diphosphate. The enzyme catalyses L-seryl-[protein] + UTP = O-(5'-uridylyl)-L-seryl-[protein] + diphosphate. It catalyses the reaction L-tyrosyl-[protein] + UTP = O-(5'-uridylyl)-L-tyrosyl-[protein] + diphosphate. Its function is as follows. Nucleotidyltransferase involved in the post-translational modification of proteins. It can catalyze the addition of adenosine monophosphate (AMP) or uridine monophosphate (UMP) to a protein, resulting in modifications known as AMPylation and UMPylation. This is Protein nucleotidyltransferase YdiU from Cupriavidus metallidurans (strain ATCC 43123 / DSM 2839 / NBRC 102507 / CH34) (Ralstonia metallidurans).